A 181-amino-acid chain; its full sequence is uncharacterized protein (181 aa).

This is an uncharacterized protein from Ictalurid herpesvirus 1 (strain Auburn) (IcHV-1).